The sequence spans 540 residues: Beta-secretase (540 aa).

The N-terminal stretch at 1 to 31 (MHFSLPTSRIVVVVPAAAICIVCVLIETCTA) is a signal peptide. A Peptidase A1 domain is found at 81 to 435 (YYIEVDIGTP…DRENKRVGFA (355 aa)). Residues Asp-99 and Asp-302 contribute to the active site. Cystine bridges form between Cys-222-Cys-439, Cys-291-Cys-469, and Cys-345-Cys-397. The chain crosses the membrane as a helical span at residues 483 to 503 (ITAYVLAAICLVCLIPVIVFA). Topologically, residues 504 to 540 (LTHQINKRCKGRRGRGVVNHHRLDQEGLAENEPNSDP) are cytoplasmic.

It belongs to the peptidase A1 family.

It localises to the membrane. This is Beta-secretase from Strongylocentrotus purpuratus (Purple sea urchin).